The following is a 122-amino-acid chain: Large ribosomal subunit protein uL14 (122 aa).

It belongs to the universal ribosomal protein uL14 family. As to quaternary structure, part of the 50S ribosomal subunit. Forms a cluster with proteins L3 and L19. In the 70S ribosome, L14 and L19 interact and together make contacts with the 16S rRNA in bridges B5 and B8.

Functionally, binds to 23S rRNA. Forms part of two intersubunit bridges in the 70S ribosome. The sequence is that of Large ribosomal subunit protein uL14 from Lactobacillus acidophilus (strain ATCC 700396 / NCK56 / N2 / NCFM).